The primary structure comprises 270 residues: Glucosamine-6-phosphate deaminase (270 aa).

Asp-72 acts as the Proton acceptor; for enolization step in catalysis. Residue Asp-141 is the For ring-opening step of the active site. Catalysis depends on His-143, which acts as the Proton acceptor; for ring-opening step. The For ring-opening step role is filled by Glu-148.

This sequence belongs to the glucosamine/galactosamine-6-phosphate isomerase family. NagB subfamily. Homohexamer.

It catalyses the reaction alpha-D-glucosamine 6-phosphate + H2O = beta-D-fructose 6-phosphate + NH4(+). The protein operates within amino-sugar metabolism; N-acetylneuraminate degradation; D-fructose 6-phosphate from N-acetylneuraminate: step 5/5. With respect to regulation, allosterically activated by N-acetylglucosamine 6-phosphate (GlcNAc6P). In terms of biological role, catalyzes the reversible isomerization-deamination of glucosamine 6-phosphate (GlcN6P) to form fructose 6-phosphate (Fru6P) and ammonium ion. This chain is Glucosamine-6-phosphate deaminase, found in Photorhabdus laumondii subsp. laumondii (strain DSM 15139 / CIP 105565 / TT01) (Photorhabdus luminescens subsp. laumondii).